Consider the following 87-residue polypeptide: Small ribosomal subunit protein bS20 (87 aa).

Residues 1-26 (MANTAQAKKRVRQNIKQRERNSGLRS) are disordered.

The protein belongs to the bacterial ribosomal protein bS20 family.

Functionally, binds directly to 16S ribosomal RNA. The polypeptide is Small ribosomal subunit protein bS20 (Nitrosomonas eutropha (strain DSM 101675 / C91 / Nm57)).